The chain runs to 466 residues: MSLHFGSQVFSSRSAAFPGRGTQVRLSSVRPGGFGSSSSLYGLGASRPRVAARSSYGAPVGTGIRAVTINQSLLTPLQVDIDPSIQQVRQEEREQIKTLNNKFASFIDKVRFLEQQNKLLETKWALLQEQKSAKSNRLPGIFEAQIAGLRKQLEALQLDGGRLEVELRNMQDVVEDFKNKYEDEINHRTAAENEFVVLKKDVDVAYMNKVELEAKVDTLNDEINFLRTLYEQELKELQSEVSDTSVVLSMDNNRSLDLDSIIAEVKAQYEEIANRSRAEAEACYQTKFETLQAQAGKHGDDLQNTRNEIADMNRAVQRLQAEIDSVKNQRSKLEAAIADAEQRGELAVKDARAKQEDLEAALQKAKQDMTRQLREYQELMNVKLALDIEIATYRKLLEGEESRLTGDGVGAVNISVVSSTGGSGSLLTFGGTMGNNALRFSSGGGPGTLKAYSMRTTSATSRSPRK.

Ser-2 is modified (N-acetylserine). 2 positions are modified to phosphoserine: Ser-2 and Ser-7. The interval 2 to 91 (SLHFGSQVFS…DPSIQQVRQE (90 aa)) is head. Residue Ser-12 is glycosylated (O-linked (GlcNAc) serine). Arg-20 is modified (dimethylated arginine; alternate). At Arg-20 the chain carries Omega-N-methylarginine; alternate. Phosphoserine is present on residues Ser-54, Ser-72, and Ser-84. Residues 91–127 (EEREQIKTLNNKFASFIDKVRFLEQQNKLLETKWALL) are coil 1A. Residues 92–404 (EREQIKTLNN…KLLEGEESRL (313 aa)) enclose the IF rod domain. Thr-98 carries the post-translational modification Phosphothreonine. Residues 128 to 145 (QEQKSAKSNRLPGIFEAQ) form a linker 1 region. A Glycyl lysine isopeptide (Lys-Gly) (interchain with G-Cter in SUMO2) cross-link involves residue Lys-131. The coil 1B stretch occupies residues 146–237 (IAGLRKQLEA…TLYEQELKEL (92 aa)). Lys-180 is subject to N6-acetyllysine. Positions 238 to 261 (QSEVSDTSVVLSMDNNRSLDLDSI) are linker 12. A Phosphoserine modification is found at Ser-255. Residues 262-400 (IAEVKAQYEE…ATYRKLLEGE (139 aa)) are coil 2. Glycyl lysine isopeptide (Lys-Gly) (interchain with G-Cter in SUMO2) cross-links involve residues Lys-266 and Lys-287. Thr-290 bears the Phosphothreonine mark. Residues Lys-297 and Lys-332 each participate in a glycyl lysine isopeptide (Lys-Gly) (interchain with G-Cter in SUMO2) cross-link. Residues 401–466 (ESRLTGDGVG…TSATSRSPRK (66 aa)) form a tail region.

It belongs to the intermediate filament family. In terms of assembly, heterotetramer of two type I and two type II keratins. Interacts with eukaryotic translation initiator factor 3 (eIF3) subunit EIF3S10. Interacts with GPER1. Post-translationally, arg-20 is dimethylated, probably to asymmetric dimethylarginine.

Blocks interferon-dependent interphase and stimulates DNA synthesis in cells. This is Keratin, type II cytoskeletal 7 from Bos taurus (Bovine).